The primary structure comprises 349 residues: Meiotic recombination protein DMC1 homolog (349 aa).

An ATP-binding site is contributed by 138–145 (GEFRSGKT). R240 is a dsDNA binding site. The ssDNA site is built by R240, F243, R246, R252, and R320. DsDNA contacts are provided by R246 and R252.

Belongs to the RecA family. DMC1 subfamily. As to quaternary structure, double stacked ring-shaped homooctamer.

It localises to the nucleus. May participate in meiotic recombination. This Lilium longiflorum (Trumpet lily) protein is Meiotic recombination protein DMC1 homolog (LIM15).